The following is a 490-amino-acid chain: 7-ethoxycoumarin O-deethylase (490 aa).

Cys-432 is a binding site for heme.

It belongs to the cytochrome P450 family. It depends on heme as a cofactor.

In terms of biological role, capable of dealkylating a model xenobiotic compound, 7-ethoxycoumarin. Metabolizes with high efficiency a wide range of xenobiotics, including alkoxycoumarins, alkoxyresorufins, and several herbicides of the class of phenylureas. Catalyzes the double N-dealkylation (oxidative N-demethylation) of phenylureas such as chlortoluron and isoproturon with turnover rates comparable to those reported for physiological substrates and produces non-phytotoxic compounds. Could be used for control of herbicide tolerance and selectivity, as well as soil and groundwater bioremediation. The polypeptide is 7-ethoxycoumarin O-deethylase (CYP76B1) (Helianthus tuberosus (Jerusalem artichoke)).